We begin with the raw amino-acid sequence, 643 residues long: Transmembrane 9 superfamily member 4 (643 aa).

Residues 1–23 (MAAAMIWWPRFLLLLCLTCKGST) form the signal peptide. Topologically, residues 24–282 (FYVPGVAPIN…TMSDVQIHWF (259 aa)) are extracellular. Residues 283 to 303 (SIINSVVVVFFLSGILSMIII) form a helical membrane-spanning segment. The Cytoplasmic portion of the chain corresponds to 304–347 (RTLRKDIANYNKEDDIEDTMEESGWKLVHGDVFRPPQYPMILSS). A Phosphotyrosine modification is found at Tyr-313. The helical transmembrane segment at 348–368 (LLGSGIQLFCMILIVIFVAML) threads the bilayer. At 369–377 (GMLSPSSRG) the chain is on the extracellular side. Residues 378 to 398 (ALMTTACFLFMFMGVFGGFSA) traverse the membrane as a helical segment. At 399–417 (GRLYRTLKGHRWKKGAFCT) the chain is on the cytoplasmic side. The helical transmembrane segment at 418–438 (ATLYPGVVFGICFVLNCFIWG) threads the bilayer. Topologically, residues 439–450 (KHSSGAVPFPTM) are extracellular. The chain crosses the membrane as a helical span at residues 451-471 (VALLCMWFGISLPLVYLGYYF). Residues 472–502 (GFRKQPYDNPVRTNQIPRQIPEQRWYMNRFV) are Cytoplasmic-facing. The chain crosses the membrane as a helical span at residues 503-523 (GILMAGILPFGAMFIELFFIF). Residues 524–536 (SAIWENQFYYLFG) are Extracellular-facing. The chain crosses the membrane as a helical span at residues 537–557 (FLFLVFIILVVSCSQISIVMV). Residues 558 to 571 (YFQLCAEDYRWWWR) are Cytoplasmic-facing. The chain crosses the membrane as a helical span at residues 572–592 (NFLVSGGSAFYVLVYAIFYFV). At 593–599 (NKLDIVE) the chain is on the extracellular side. Residues 600 to 620 (FIPSLLYFGYTTLMVLSFWLL) traverse the membrane as a helical segment. Residues 621-643 (TGTIGFYAAYMFVRKIYAAVKID) are Cytoplasmic-facing.

The protein belongs to the nonaspanin (TM9SF) (TC 9.A.2) family.

Its subcellular location is the membrane. The protein resides in the golgi apparatus. It is found in the early endosome. In terms of biological role, associates with proteins harboring glycine-rich transmembrane domains and ensures their efficient localization to the cell surface. The protein is Transmembrane 9 superfamily member 4 (Tm9sf4) of Mus musculus (Mouse).